An 82-amino-acid chain; its full sequence is Defensin-like protein 22 (82 aa).

The signal sequence occupies residues 1 to 24; the sequence is MAGLKVFSFALLLILTFSLIDVEG. Intrachain disulfides connect Cys34–Cys82, Cys44–Cys69, Cys53–Cys78, and Cys57–Cys80.

This sequence belongs to the DEFL family.

The protein localises to the secreted. This is Defensin-like protein 22 from Arabidopsis thaliana (Mouse-ear cress).